The primary structure comprises 208 residues: Vacuolar ATPase assembly protein VMA12 (208 aa).

Position 2 is an N-acetylalanine (Ala-2). Helical transmembrane passes span 146-166 (LVIT…CTYL) and 179-199 (VLAA…VMVR).

In terms of assembly, accessory component of the multisubunit proton-transporting vacuolar (V)-ATPase protein pump.

It is found in the cytoplasmic vesicle. Its subcellular location is the COPI-coated vesicle membrane. The protein resides in the endoplasmic reticulum-Golgi intermediate compartment membrane. It localises to the endoplasmic reticulum membrane. Its function is as follows. Accessory component of the proton-transporting vacuolar (V)-ATPase protein pump involved in intracellular iron homeostasis. In aerobic conditions, required for intracellular iron homeostasis, thus triggering the activity of Fe(2+) prolyl hydroxylase (PHD) enzymes, and leading to HIF1A hydroxylation and subsequent proteasomal degradation. Necessary for endolysosomal acidification and lysosomal degradation. May be involved in Golgi homeostasis. Binds 20(S)-hydroxycholesterol (20(S)-OHC). This Homo sapiens (Human) protein is Vacuolar ATPase assembly protein VMA12.